Here is a 32-residue protein sequence, read N- to C-terminus: Delta-conotoxin-like CnVID (32 aa).

Disulfide bonds link C3–C18, C10–C22, and C17–C27. 4-hydroxyproline is present on residues P6 and P14.

It belongs to the conotoxin O1 superfamily. As to expression, expressed by the venom duct.

It is found in the secreted. Delta-conotoxins bind to site 6 of voltage-gated sodium channels (Nav) and inhibit the inactivation process. This toxin acts on Nav1.2/SCN2A, Nav1.3/SCN3A and Nav1.6/SCN8A (EC(50)=1.7 uM). The sequence is that of Delta-conotoxin-like CnVID from Conus consors (Singed cone).